We begin with the raw amino-acid sequence, 136 residues long: uncharacterized protein (136 aa).

This is an uncharacterized protein from Saccharomyces cerevisiae (strain ATCC 204508 / S288c) (Baker's yeast).